The primary structure comprises 388 residues: Phosphopentomutase (388 aa).

Mn(2+) contacts are provided by aspartate 10, aspartate 282, histidine 287, aspartate 323, histidine 324, and histidine 335.

The protein belongs to the phosphopentomutase family. It depends on Mn(2+) as a cofactor.

It localises to the cytoplasm. It carries out the reaction 2-deoxy-alpha-D-ribose 1-phosphate = 2-deoxy-D-ribose 5-phosphate. It catalyses the reaction alpha-D-ribose 1-phosphate = D-ribose 5-phosphate. The protein operates within carbohydrate degradation; 2-deoxy-D-ribose 1-phosphate degradation; D-glyceraldehyde 3-phosphate and acetaldehyde from 2-deoxy-alpha-D-ribose 1-phosphate: step 1/2. In terms of biological role, isomerase that catalyzes the conversion of deoxy-ribose 1-phosphate (dRib-1-P) and ribose 1-phosphate (Rib-1-P) to deoxy-ribose 5-phosphate (dRib-5-P) and ribose 5-phosphate (Rib-5-P), respectively. The sequence is that of Phosphopentomutase from Acetivibrio thermocellus (strain ATCC 27405 / DSM 1237 / JCM 9322 / NBRC 103400 / NCIMB 10682 / NRRL B-4536 / VPI 7372) (Clostridium thermocellum).